The following is a 118-amino-acid chain: Large ribosomal subunit protein uL22 (118 aa).

Belongs to the universal ribosomal protein uL22 family. As to quaternary structure, part of the 50S ribosomal subunit.

This protein binds specifically to 23S rRNA; its binding is stimulated by other ribosomal proteins, e.g. L4, L17, and L20. It is important during the early stages of 50S assembly. It makes multiple contacts with different domains of the 23S rRNA in the assembled 50S subunit and ribosome. Functionally, the globular domain of the protein is located near the polypeptide exit tunnel on the outside of the subunit, while an extended beta-hairpin is found that lines the wall of the exit tunnel in the center of the 70S ribosome. The polypeptide is Large ribosomal subunit protein uL22 (Nostoc punctiforme (strain ATCC 29133 / PCC 73102)).